We begin with the raw amino-acid sequence, 232 residues long: AA9 family lytic polysaccharide monooxygenase C (232 aa).

An N-terminal signal peptide occupies residues 1-19 (MKAAVSLALLVAVAGAASA). The Cu(2+) site is built by His-20 and His-91. A disulfide bridge connects residues Cys-61 and Cys-180. O2-binding residues include His-166 and Gln-175. Position 177 (Tyr-177) interacts with Cu(2+). N-linked (GlcNAc...) asparagine glycosylation occurs at Asn-184.

This sequence belongs to the polysaccharide monooxygenase AA9 family. The cofactor is Cu(2+).

It is found in the secreted. The catalysed reaction is [(1-&gt;4)-beta-D-glucosyl]n+m + reduced acceptor + O2 = 4-dehydro-beta-D-glucosyl-[(1-&gt;4)-beta-D-glucosyl]n-1 + [(1-&gt;4)-beta-D-glucosyl]m + acceptor + H2O.. Functionally, lytic polysaccharide monooxygenase (LPMO) that depolymerizes crystalline and amorphous polysaccharides via the oxidation of scissile alpha- or beta-(1-4)-glycosidic bonds, yielding C1 or C4 oxidation products. Catalysis by LPMOs requires the reduction of the active-site copper from Cu(II) to Cu(I) by a reducing agent and H(2)O(2) or O(2) as a cosubstrate. This is AA9 family lytic polysaccharide monooxygenase C from Malbranchea cinnamomea (Thermophilic fungus).